Here is a 486-residue protein sequence, read N- to C-terminus: Transcriptional adapter 2-beta (486 aa).

The segment at 4 to 59 adopts a ZZ-type zinc-finger fold; it reads LGKKYCVNCLADVTNLRIRCAECQDIELCPECFSAGAEIGNHRRWHGYQQVDGGRF. Positions 9, 12, 23, 26, 32, 35, 45, and 49 each coordinate Zn(2+). The region spanning 65 to 118 is the SANT domain; that stretch reads EAEGGWTSREEQSLLDAIEQYGFGNWEDMAAHVGASRTPQEVMDHYVSMYIHGN. Disordered stretches follow at residues 237 to 291 and 343 to 377; these read KKDK…EKGQ and EYEA…TAGL. Gly residues-rich tracts occupy residues 247-262 and 367-377; these read GTVG…GSGS and SSGGGGGTAGL.

Its subcellular location is the nucleus. Its function is as follows. Transcriptional coactivator. The protein is Transcriptional adapter 2-beta (tada2b) of Danio rerio (Zebrafish).